Consider the following 428-residue polypeptide: Histone-lysine N-methyltransferase SMYD3 (428 aa).

N-acetylmethionine is present on Met1. In terms of domain architecture, SET spans 4–240; it reads LKVEKFATAK…VGEELTICYL (237 aa). 14 to 16 is a binding site for S-adenosyl-L-methionine; the sequence is RGN. Thr22 bears the Phosphothreonine mark. Residues Cys49, Cys52, Cys62, Cys65, Cys71, Cys75, His83, and Cys87 each contribute to the Zn(2+) site. The MYND-type zinc finger occupies 49-87; that stretch reads CDRCLLGKEKLMRCSQCRVAKYCSAKCQKKAWPDHKREC. S-adenosyl-L-methionine is bound by residues Tyr124, Asn132, Asn181, 205 to 206, Tyr239, and Phe259; that span reads NH. The interval 272–428 is C-terminal domain; essential for histone methyltransferase activity, nuclear localization and mediates interaction with HSP90AA1; it reads DADMLTGDEQ…EECDANIRAS (157 aa).

This sequence belongs to the class V-like SAM-binding methyltransferase superfamily. Histone-lysine methyltransferase family. Interacts with HSPCA. Interacts with HELZ. Interacts with POLR2A; the interaction may be indirect and may be mediated by HELZ. Interacts with HSP90AA1; this interaction enhances SMYD3 histone-lysine N-methyltransferase. In terms of tissue distribution, expressed in skeletal muscles and testis. Overexpressed in a majority of colorectal and hepatocellular carcinomas.

Its subcellular location is the cytoplasm. It is found in the nucleus. It carries out the reaction L-lysyl(4)-[histone H3] + 3 S-adenosyl-L-methionine = N(6),N(6),N(6)-trimethyl-L-lysyl(4)-[histone H3] + 3 S-adenosyl-L-homocysteine + 3 H(+). With respect to regulation, histone methyltransferase activity strongly stimulated by HSPCA. Its function is as follows. Histone methyltransferase. Specifically methylates 'Lys-4' of histone H3, inducing di- and tri-methylation, but not monomethylation. Also methylates 'Lys-5' of histone H4. Plays an important role in transcriptional activation as a member of an RNA polymerase complex. Binds DNA containing 5'-CCCTCC-3' or 5'-GAGGGG-3' sequences. This is Histone-lysine N-methyltransferase SMYD3 (SMYD3) from Homo sapiens (Human).